A 728-amino-acid chain; its full sequence is Nucleolar GTP-binding protein 2 (728 aa).

An N-acetylmethionine modification is found at M1. The interval 1 to 33 (MVKPKYKGRSTINRSAASTNPDRVQGAGGQNMR) is disordered. A compositionally biased stretch (polar residues) spans 10 to 22 (STINRSAASTNPD). A CP-type G domain is found at 207–368 (WGELYKVIDS…LIDCPGVVYP (162 aa)). GTP-binding positions include 317–324 (GYPNVGKS) and 361–365 (DCPGV). Disordered regions lie at residues 462–521 (PPNA…RNSE), 538–595 (VGPQ…DTKA), and 636–728 (YKEE…RQKQ). Over residues 480 to 489 (EVPTETTQNN) the composition is skewed to low complexity. The span at 498–520 (EVERSDSITEKEPEGDCSQDRNS) shows a compositional bias: basic and acidic residues. S504 is modified (phosphoserine). Over residues 553–586 (SDLEDLESSGEEEEQEQEQPGEDAEEERSPDTQE) the composition is skewed to acidic residues. Basic residues predominate over residues 718 to 728 (KHRRNKFRQKQ).

Belongs to the TRAFAC class YlqF/YawG GTPase family. NOG2 subfamily. Interacts with LYAR and RPL23A. Interacts with the nuclear importin-beta receptor and, at a lower extent, with importin-alpha.

It localises to the nucleus. It is found in the nucleolus. Its function is as follows. GTPase that associates with pre-60S ribosomal subunits in the nucleolus and is required for their nuclear export and maturation. May promote cell proliferation possibly by increasing p53/TP53 protein levels, and consequently those of its downstream product CDKN1A/p21, and decreasing RPL23A protein levels. This chain is Nucleolar GTP-binding protein 2 (Gnl2), found in Mus musculus (Mouse).